Reading from the N-terminus, the 399-residue chain is Elongation factor Tu (399 aa).

The region spanning 10-204 is the tr-type G domain; that stretch reads KPHVNIGTIG…AVDEAIPEPE (195 aa). Residues 19–26 form a G1 region; it reads GHVDHGKT. 19-26 contributes to the GTP binding site; it reads GHVDHGKT. Thr-26 contacts Mg(2+). The segment at 60 to 64 is G2; that stretch reads GITIN. Residues 81 to 84 form a G3 region; that stretch reads DCPG. GTP contacts are provided by residues 81 to 85 and 136 to 139; these read DCPGH and NKCD. The segment at 136-139 is G4; it reads NKCD. Positions 174-176 are G5; that stretch reads SGL.

This sequence belongs to the TRAFAC class translation factor GTPase superfamily. Classic translation factor GTPase family. EF-Tu/EF-1A subfamily. Monomer.

It is found in the cytoplasm. The catalysed reaction is GTP + H2O = GDP + phosphate + H(+). GTP hydrolase that promotes the GTP-dependent binding of aminoacyl-tRNA to the A-site of ribosomes during protein biosynthesis. In Parasynechococcus marenigrum (strain WH8102), this protein is Elongation factor Tu.